A 375-amino-acid chain; its full sequence is tRNA/tmRNA (uracil-C(5))-methyltransferase (375 aa).

Residues Gln197, Tyr225, Asn230, Glu246, and Asp306 each coordinate S-adenosyl-L-methionine. The active-site Nucleophile is the Cys331. The Proton acceptor role is filled by Glu365.

Belongs to the class I-like SAM-binding methyltransferase superfamily. RNA M5U methyltransferase family. TrmA subfamily.

It catalyses the reaction uridine(54) in tRNA + S-adenosyl-L-methionine = 5-methyluridine(54) in tRNA + S-adenosyl-L-homocysteine + H(+). The catalysed reaction is uridine(341) in tmRNA + S-adenosyl-L-methionine = 5-methyluridine(341) in tmRNA + S-adenosyl-L-homocysteine + H(+). Functionally, dual-specificity methyltransferase that catalyzes the formation of 5-methyluridine at position 54 (m5U54) in all tRNAs, and that of position 341 (m5U341) in tmRNA (transfer-mRNA). The protein is tRNA/tmRNA (uracil-C(5))-methyltransferase of Aliarcobacter butzleri (strain RM4018) (Arcobacter butzleri).